The chain runs to 449 residues: Glutamate--tRNA ligase (449 aa).

A 'HIGH' region motif is present at residues 10-20 (PSPTGFLHIGN). The 'KMSKS' region signature appears at 214-218 (KLSKR). Lys-217 lines the ATP pocket.

It belongs to the class-I aminoacyl-tRNA synthetase family. Glutamate--tRNA ligase type 1 subfamily. Monomer.

It localises to the cytoplasm. The enzyme catalyses tRNA(Glu) + L-glutamate + ATP = L-glutamyl-tRNA(Glu) + AMP + diphosphate. Functionally, catalyzes the attachment of glutamate to tRNA(Glu) in a two-step reaction: glutamate is first activated by ATP to form Glu-AMP and then transferred to the acceptor end of tRNA(Glu). This chain is Glutamate--tRNA ligase, found in Onion yellows phytoplasma (strain OY-M).